Here is a 228-residue protein sequence, read N- to C-terminus: RING1 and YY1-binding protein (228 aa).

Disordered stretches follow at residues Met1–Asp21, Gln65–Ala156, and Asp172–Phe228. The RanBP2-type zinc finger occupies Asp21 to Thr50. A compositionally biased stretch (basic and acidic residues) spans Pro76–Ile98. Lys77 is covalently cross-linked (Glycyl lysine isopeptide (Lys-Gly) (interchain with G-Cter in SUMO2)). Residue Ser99 is modified to Phosphoserine. Residues Pro113 to Pro122 are compositionally biased toward basic and acidic residues. Phosphoserine occurs at positions 123, 127, and 130. Positions Glu124–Thr143 are enriched in polar residues. Residues Thr143–Glu226 are interaction with GABPB1 and FANK1. A compositionally biased stretch (low complexity) spans Ser179–Glu204. Position 227 is a phosphoserine (Ser227).

Monomer. Component of repressive BCOR complex containing Polycomb group subcomplex at least composed of BCOR, PCGF1, RING1 and RNF2/RING2. Component of PCR1-like complexes. Interacts with PCGF1. Part of a PCR1-like complex that contains AUTS2, PCGF5, RNF2, CSNK2B and RYBP. Interacts with RNF2; the interaction is direct. Interacts with CBX2, YAF2, RING1 and RNF2. Interacts with ubiquitin and ubiquitinated proteins. Interacts with ubiquitinated histone H2A. Interacts with apoptin, DEDD, FADD, CASP8, CASP10, YY1 and GABPB1. Together with GABPB1 and YY1, it forms a ternary complex, probably being the bridge factor between these two transcription factors. Interacts with MDM2, and thereby inhibits ubiquitination of TP53. Identified in a ternary complex containing MDM2, TP53 and RYBP. Interacts with FANK1; may prevent the ubiquitin-mediated proteasomal degradation of FANK1. Interacts with IFT57. Monoubiquitinated. As to expression, down-regulated in breast cancer tissues and in several breast cancer cell lines (at protein level). Widely expressed with highest levels in lymphoid tissues and placenta.

It localises to the nucleus. Its subcellular location is the cytoplasm. The protein resides in the nucleoplasm. In terms of biological role, component of a Polycomb group (PcG) multiprotein PRC1-like complex, a complex class required to maintain the transcriptionally repressive state of many genes, including Hox genes, throughout development. PcG PRC1-like complex acts via chromatin remodeling and modification of histones; it mediates monoubiquitination of histone H2A 'Lys-119', rendering chromatin heritably changed in its expressibility. Component of a PRC1-like complex that mediates monoubiquitination of histone H2A 'Lys-119' on the X chromosome and is required for normal silencing of one copy of the X chromosome in XX females. May stimulate ubiquitination of histone H2A 'Lys-119' by recruiting the complex to target sites. Inhibits ubiquitination and subsequent degradation of TP53, and thereby plays a role in regulating transcription of TP53 target genes. May also regulate the ubiquitin-mediated proteasomal degradation of other proteins like FANK1 to regulate apoptosis. May be implicated in the regulation of the transcription as a repressor of the transcriptional activity of E4TF1. May bind to DNA. May play a role in the repression of tumor growth and metastasis in breast cancer by down-regulating SRRM3. The chain is RING1 and YY1-binding protein (RYBP) from Homo sapiens (Human).